We begin with the raw amino-acid sequence, 621 residues long: Kelch-like protein 6 (621 aa).

In terms of domain architecture, BTB spans 72-139; it reads TDVILCVDIQ…TYTSKALITK (68 aa). Residues 174–276 enclose the BACK domain; it reads CVGILRLADT…DPWYFVETVE (103 aa). Kelch repeat units lie at residues 320–367, 378–421, 422–468, 470–516, 517–558, and 560–606; these read VFMI…NKKW, EVYI…VLGG, KVYV…SHKK, LYVI…SFRD, RIYV…PCNN, and LYIT…TIRK.

As to expression, found in germinal center B-cells.

Functionally, involved in B-lymphocyte antigen receptor signaling and germinal center formation. In Homo sapiens (Human), this protein is Kelch-like protein 6 (KLHL6).